A 250-amino-acid polypeptide reads, in one-letter code: Cobalt transport protein CbiM (250 aa).

The signal sequence occupies residues 1–24 (MKYWGTALLGAFCVFFFTPNTAYA). 6 helical membrane-spanning segments follow: residues 32 to 52 (LPAGWCLFWLALSVPFVFWGI), 67 to 87 (MLLGLAGAFVFVLSALKIPSV), 99 to 119 (LGAILFGPAVMSVLGCIVLLF), 122 to 142 (LLLAHGGITTLGANVFSMGVM), 161 to 181 (VAVFLAASLGNMTTYMVTSLQ), and 203 to 223 (IFAITQIPLAITEGLLTVFVF).

Belongs to the CbiM family. In terms of assembly, forms an energy-coupling factor (ECF) transporter complex composed of an ATP-binding protein (A component, CbiO), a transmembrane protein (T component, CbiQ) and 2 possible substrate-capture proteins (S components, CbiM and CbiN) of unknown stoichimetry.

It localises to the cell membrane. The protein operates within cofactor biosynthesis; adenosylcobalamin biosynthesis. In terms of biological role, part of the energy-coupling factor (ECF) transporter complex CbiMNOQ involved in cobalt import. This Desulforamulus reducens (strain ATCC BAA-1160 / DSM 100696 / MI-1) (Desulfotomaculum reducens) protein is Cobalt transport protein CbiM.